The chain runs to 216 residues: Cobalt-zinc-cadmium resistance protein CzcN (216 aa).

3 helical membrane passes run 27–47 (IGVW…GHSR), 50–70 (GTWV…LATV), and 116–136 (ESLA…PAVI).

To A.xylosoxydans NccN.

It is found in the cell inner membrane. Component of the CZC cation-efflux system that confers resistance to cobalt, zinc and cadmium. The protein is Cobalt-zinc-cadmium resistance protein CzcN (czcN) of Cupriavidus metallidurans (strain ATCC 43123 / DSM 2839 / NBRC 102507 / CH34) (Ralstonia metallidurans).